Reading from the N-terminus, the 307-residue chain is Ribosomal RNA small subunit methyltransferase H (307 aa).

Residues 32-34 (GGH), aspartate 52, phenylalanine 78, aspartate 99, and glutamine 106 each bind S-adenosyl-L-methionine.

Belongs to the methyltransferase superfamily. RsmH family.

Its subcellular location is the cytoplasm. It carries out the reaction cytidine(1402) in 16S rRNA + S-adenosyl-L-methionine = N(4)-methylcytidine(1402) in 16S rRNA + S-adenosyl-L-homocysteine + H(+). Its function is as follows. Specifically methylates the N4 position of cytidine in position 1402 (C1402) of 16S rRNA. The protein is Ribosomal RNA small subunit methyltransferase H of Acinetobacter baumannii (strain AB307-0294).